A 334-amino-acid polypeptide reads, in one-letter code: Ornithine carbamoyltransferase (334 aa).

Carbamoyl phosphate is bound by residues 57–60 (STRT), Arg-108, and 135–138 (HPTQ). Residues Asn-168, Asp-232, and 236 to 237 (SM) contribute to the L-ornithine site. Carbamoyl phosphate is bound by residues 274–275 (CL) and Arg-321.

This sequence belongs to the aspartate/ornithine carbamoyltransferase superfamily. OTCase family.

The protein resides in the cytoplasm. The enzyme catalyses carbamoyl phosphate + L-ornithine = L-citrulline + phosphate + H(+). It functions in the pathway amino-acid biosynthesis; L-arginine biosynthesis; L-arginine from L-ornithine and carbamoyl phosphate: step 1/3. Functionally, reversibly catalyzes the transfer of the carbamoyl group from carbamoyl phosphate (CP) to the N(epsilon) atom of ornithine (ORN) to produce L-citrulline. This is Ornithine carbamoyltransferase from Cutibacterium acnes (strain DSM 16379 / KPA171202) (Propionibacterium acnes).